The chain runs to 302 residues: tRNA-cytidine(32) 2-sulfurtransferase (302 aa).

The PP-loop motif signature appears at 43–48 (SGGKDS). Cysteine 118, cysteine 121, and cysteine 209 together coordinate [4Fe-4S] cluster.

It belongs to the TtcA family. Homodimer. Requires Mg(2+) as cofactor. [4Fe-4S] cluster serves as cofactor.

Its subcellular location is the cytoplasm. It carries out the reaction cytidine(32) in tRNA + S-sulfanyl-L-cysteinyl-[cysteine desulfurase] + AH2 + ATP = 2-thiocytidine(32) in tRNA + L-cysteinyl-[cysteine desulfurase] + A + AMP + diphosphate + H(+). Its pathway is tRNA modification. Its function is as follows. Catalyzes the ATP-dependent 2-thiolation of cytidine in position 32 of tRNA, to form 2-thiocytidine (s(2)C32). The sulfur atoms are provided by the cysteine/cysteine desulfurase (IscS) system. The polypeptide is tRNA-cytidine(32) 2-sulfurtransferase (Polynucleobacter asymbioticus (strain DSM 18221 / CIP 109841 / QLW-P1DMWA-1) (Polynucleobacter necessarius subsp. asymbioticus)).